The primary structure comprises 637 residues: Phosphomethylpyrimidine synthase (637 aa).

Substrate-binding positions include Asn-242, Met-271, Tyr-300, His-336, 356–358 (SRG), 397–400 (DGLR), and Glu-436. His-440 contacts Zn(2+). Tyr-463 contributes to the substrate binding site. His-504 is a Zn(2+) binding site. Residues Cys-584, Cys-587, and Cys-592 each contribute to the [4Fe-4S] cluster site.

This sequence belongs to the ThiC family. Homodimer. [4Fe-4S] cluster serves as cofactor.

The catalysed reaction is 5-amino-1-(5-phospho-beta-D-ribosyl)imidazole + S-adenosyl-L-methionine = 4-amino-2-methyl-5-(phosphooxymethyl)pyrimidine + CO + 5'-deoxyadenosine + formate + L-methionine + 3 H(+). The protein operates within cofactor biosynthesis; thiamine diphosphate biosynthesis. Functionally, catalyzes the synthesis of the hydroxymethylpyrimidine phosphate (HMP-P) moiety of thiamine from aminoimidazole ribotide (AIR) in a radical S-adenosyl-L-methionine (SAM)-dependent reaction. The sequence is that of Phosphomethylpyrimidine synthase from Bordetella bronchiseptica (strain ATCC BAA-588 / NCTC 13252 / RB50) (Alcaligenes bronchisepticus).